We begin with the raw amino-acid sequence, 289 residues long: Fumagillin beta-trans-bergamotene synthase af520 (289 aa).

Transmembrane regions (helical) follow at residues 35–55 (AVAL…GFLW), 95–115 (TLLY…TNTI), 142–162 (LIGA…FDGG), 165–185 (LHGL…TTGH), 222–242 (AWTI…LAYV), and 262–282 (YVSY…PIFP).

Belongs to the paxB family.

The protein resides in the membrane. The enzyme catalyses (2E,6E)-farnesyl diphosphate = (+)-exo-beta-bergamotene + diphosphate. Its pathway is secondary metabolite biosynthesis; terpenoid biosynthesis. Beta-trans-bergamotene synthase; part of the gene cluster that mediates the biosynthesis of fumagillin, a meroterpenoid that has numerous biological activities including irreversible inhibition of human type 2 methionine aminopeptidase (METAP2). Within the pathway, the membrane-bound fumagillin beta-trans-bergamotene synthase af520 converts farnesyl pyrophosphate (FPP) to beta-trans-bergamotene. The pathway begins with the conversion of FPP to beta-trans-bergamotene by af520. The multifunctional cytochrome P450 monooxygenase af510 then converts beta-trans-bergamotene into 5-keto-demethoxyfumagillol via several oxydation steps. 5-keto-demethoxyfumagillol is then subjected to successive C-6 hydroxylation and O-methylation by the dioxygenase af480 and O-methyltransferase af390-400, respectively, to yield 5-keto-fumagillol, which is then stereoselectively reduced by the keto-reductase af490 to 5R-hydroxy-seco-sesquiterpene. The next step is the polyketide transferase af380-catalyzed transfer of a dodecapentaenoyl group synthesized by the polyketide synthase af370 onto 5R-hydroxy-seco-sesquiterpene which leads to the production of prefumagillin. Finally, oxidative cleavage by the monooxygenase af470 converts prefumagillin to fumagillin. The protein is Fumagillin beta-trans-bergamotene synthase af520 of Aspergillus fumigatus (strain ATCC MYA-4609 / CBS 101355 / FGSC A1100 / Af293) (Neosartorya fumigata).